Consider the following 584-residue polypeptide: uncharacterized protein (584 aa).

Positions 353-375 are enriched in polar residues; the sequence is NSEGQTNAETSLNGKGTVGNQWA. Disordered regions lie at residues 353–379, 400–426, and 463–565; these read NSEG…SPPE, LESK…VSSH, and SVDS…CNSG. Over residues 502-511 the composition is skewed to polar residues; the sequence is KANSPASSRL. The segment covering 516–535 has biased composition (basic and acidic residues); it reads DSSHLSKHVNFDKNPDHSEA.

This is an uncharacterized protein from Mus musculus (Mouse).